A 387-amino-acid polypeptide reads, in one-letter code: Large ribosomal subunit protein uL3 (387 aa).

This sequence belongs to the universal ribosomal protein uL3 family.

Its subcellular location is the cytoplasm. In Candida glabrata (strain ATCC 2001 / BCRC 20586 / JCM 3761 / NBRC 0622 / NRRL Y-65 / CBS 138) (Yeast), this protein is Large ribosomal subunit protein uL3 (RPL3).